We begin with the raw amino-acid sequence, 291 residues long: Tyrosine isonitrile desaturase (291 aa).

The Fe cation site is built by histidine 110, aspartate 112, and histidine 259.

The protein belongs to the TfdA dioxygenase family. As to quaternary structure, homotrimer in solution. Fe(2+) is required as a cofactor.

It carries out the reaction (2S)-3-(4-hydroxyphenyl)-2-isocyanopropanoate + 2-oxoglutarate + O2 = (2E)-3-(4-hydroxyphenyl)-2-isocyanoprop-2-enoate + succinate + CO2 + H2O. Functionally, involved in the biosynthesis of paerucumarin, a cyclized isocyano derivative of tyrosine. Catalyzes the 2-oxoglutarate-dependent oxidation of tyrosine isonitrile. This is Tyrosine isonitrile desaturase from Pseudomonas aeruginosa (strain ATCC 15692 / DSM 22644 / CIP 104116 / JCM 14847 / LMG 12228 / 1C / PRS 101 / PAO1).